Here is a 291-residue protein sequence, read N- to C-terminus: Polyamine aminopropyltransferase (291 aa).

The PABS domain occupies 5-245 (PGPISLIEPL…YAVNYILGSL (241 aa)). Gln-36 contacts S-methyl-5'-thioadenosine. Residues His-67 and Glu-91 each contribute to the spermidine site. S-methyl-5'-thioadenosine is bound by residues Asp-111 and 143 to 144 (DG). Asp-164 functions as the Proton acceptor in the catalytic mechanism.

This sequence belongs to the spermidine/spermine synthase family. In terms of assembly, homodimer or homotetramer.

The protein localises to the cytoplasm. The enzyme catalyses S-adenosyl 3-(methylsulfanyl)propylamine + putrescine = S-methyl-5'-thioadenosine + spermidine + H(+). It participates in amine and polyamine biosynthesis; spermidine biosynthesis; spermidine from putrescine: step 1/1. Catalyzes the irreversible transfer of a propylamine group from the amino donor S-adenosylmethioninamine (decarboxy-AdoMet) to putrescine (1,4-diaminobutane) to yield spermidine. In Pyrobaculum neutrophilum (strain DSM 2338 / JCM 9278 / NBRC 100436 / V24Sta) (Thermoproteus neutrophilus), this protein is Polyamine aminopropyltransferase.